A 447-amino-acid chain; its full sequence is N-succinylarginine dihydrolase (447 aa).

Residues 19 to 28 (AGLSFGNEAS), Asn-110, and 137 to 138 (HR) each bind substrate. Glu-174 is a catalytic residue. Arg-212 provides a ligand contact to substrate. Residue His-248 is part of the active site. Residues Asp-250 and Asn-359 each contribute to the substrate site. The active-site Nucleophile is Cys-365.

This sequence belongs to the succinylarginine dihydrolase family. As to quaternary structure, homodimer.

It catalyses the reaction N(2)-succinyl-L-arginine + 2 H2O + 2 H(+) = N(2)-succinyl-L-ornithine + 2 NH4(+) + CO2. It functions in the pathway amino-acid degradation; L-arginine degradation via AST pathway; L-glutamate and succinate from L-arginine: step 2/5. Functionally, catalyzes the hydrolysis of N(2)-succinylarginine into N(2)-succinylornithine, ammonia and CO(2). The protein is N-succinylarginine dihydrolase of Salmonella dublin (strain CT_02021853).